The chain runs to 651 residues: Probable potassium transport system protein Kup (651 aa).

12 helical membrane passes run 41–61 (LVLG…IYAF), 82–102 (VVSL…VLFV), 130–150 (LILG…VITP), 163–183 (IVAP…LVTL), 194–214 (VAIV…ASGL), 235–255 (FLTV…LAMT), 276–296 (WLWI…AFIL), 309–329 (MIPS…TVIA), 366–386 (IYIP…VLGF), 395–415 (AYGI…YIAM), 426–446 (ALPI…ANII), and 450–470 (EGGW…WTWV).

Belongs to the HAK/KUP transporter (TC 2.A.72) family.

The protein localises to the cell inner membrane. The enzyme catalyses K(+)(in) + H(+)(in) = K(+)(out) + H(+)(out). Functionally, transport of potassium into the cell. Likely operates as a K(+):H(+) symporter. This is Probable potassium transport system protein Kup from Brucella abortus (strain S19).